Consider the following 1000-residue polypeptide: Kinesin-like protein CIN8 (1000 aa).

Over residues 1–26 the composition is skewed to polar residues; that stretch reads MPAENQNTGQDRSSNSISKNGNSQVG. The disordered stretch occupies residues 1–28; that stretch reads MPAENQNTGQDRSSNSISKNGNSQVGCH. The Kinesin motor domain maps to 36–477; sequence NITVAVRCRG…LEYASKAKNI (442 aa). Residue 128–135 coordinates ATP; that stretch reads GMTSTGKT. Positions 220-242 are enriched in low complexity; the sequence is ANNTTSNSASSSRSNSRNSSPRS. 2 disordered regions span residues 220–248 and 260–312; these read ANNTTSNSASSSRSNSRNSSPRSLNDLTP and KSLP…PNDQ. Positions 261 to 276 are enriched in polar residues; it reads SLPNTIKQQYQQQQAV. The segment covering 277 to 301 has biased composition (low complexity); it reads NSRNNSSSNSGSTTNNASSNTNTNN. Polar residues predominate over residues 302–312; the sequence is GQRSSMAPNDQ. Coiled-coil stretches lie at residues 518-615 and 860-904; these read MSQD…MALH and ISVM…IKNS. Residues 970-1000 form a disordered region; it reads VISPKKHAIEDENKSSENVDNEGSRKMLKIE. Phosphoserine is present on Ser-972. Residues 976-1000 are compositionally biased toward basic and acidic residues; it reads HAIEDENKSSENVDNEGSRKMLKIE.

This sequence belongs to the TRAFAC class myosin-kinesin ATPase superfamily. Kinesin family. BimC subfamily.

It localises to the cytoplasm. It is found in the cytoskeleton. The protein resides in the spindle. The protein localises to the mitochondrion. Functionally, elongates the mitotic spindle by interacting with spindle microtubules to generate an outward force pushing spindle poles apart. Following spindle assembly, CIN8 and KIP1 apparently act to oppose a force, possibly generated by KAR3, that draws separated poles back together. This Saccharomyces cerevisiae (strain ATCC 204508 / S288c) (Baker's yeast) protein is Kinesin-like protein CIN8 (CIN8).